Consider the following 333-residue polypeptide: Chlorophyllide reductase 35.5 kDa chain (333 aa).

The span at 1–17 (MTDAPELKAFDQRLRDE) shows a compositional bias: basic and acidic residues. Residues 1–30 (MTDAPELKAFDQRLRDEAAEEPTLEVPQGE) form a disordered region. Residues 45-50 (GIGKSF) and Lys-74 contribute to the ATP site. Ser-49 lines the Mg(2+) pocket. Residues Cys-130 and Cys-165 each coordinate [4Fe-4S] cluster. 219-220 (NK) is an ATP binding site.

The protein belongs to the NifH/BchL/ChlL family. In terms of assembly, homodimer. Chlorophyllide reductase is composed of three subunits; BchX, BchY and BchZ. The cofactor is [4Fe-4S] cluster.

The enzyme catalyses 3-deacetyl-3-vinylbacteriochlorophyllide a + 2 oxidized [2Fe-2S]-[ferredoxin] + ADP + phosphate = chlorophyllide a + 2 reduced [2Fe-2S]-[ferredoxin] + ATP + H2O + H(+). The catalysed reaction is bacteriochlorophyllide a + 2 oxidized [2Fe-2S]-[ferredoxin] + ADP + phosphate = 3-acetyl-3-devinylchlorophyllide a + 2 reduced [2Fe-2S]-[ferredoxin] + ATP + H2O + H(+). It catalyses the reaction 3-deacetyl-3-(1-hydroxyethyl)bacteriochlorophyllide a + 2 oxidized [2Fe-2S]-[ferredoxin] + ADP + phosphate = 3-devinyl-3-(1-hydroxyethyl)chlorophyllide a + 2 reduced [2Fe-2S]-[ferredoxin] + ATP + H2O + H(+). Its pathway is porphyrin-containing compound metabolism; bacteriochlorophyll biosynthesis. Functionally, converts chlorophylls (Chl) into bacteriochlorophylls (BChl) by reducing ring B of the tetrapyrrole. The polypeptide is Chlorophyllide reductase 35.5 kDa chain (bchX) (Cereibacter sphaeroides (strain ATCC 17023 / DSM 158 / JCM 6121 / CCUG 31486 / LMG 2827 / NBRC 12203 / NCIMB 8253 / ATH 2.4.1.) (Rhodobacter sphaeroides)).